Here is a 340-residue protein sequence, read N- to C-terminus: MSSTALIHDDEALEPTLQSILDQKTLRWIFVGGKGGVGKTTTSCSLAIQLSKVRKSVLLISTDPAHNLSDAFGQKFGKEARLVDGFTNLSAMEIDPNGSIQDLLASGGEAQEDPLAGLGMGGMMQDLAFSIPGVDEAMSFAEVLKQVKSLSYEVIVFDTAPTGHTLRFLQFPTVLEKALAKLSQLSSQFGPMLNSILGSRGGLPGGQNLDDLMSKMESLRETISEVNTQFKNPDMTTFVCVCIAEFLSLYETERMIQELTSYGIDTHAIVVNQLLFPKKDNPCEQCNARRKMQKKYLEQIEELYEDFNVVRMPLLVEEVRGKEKLEKFSEMLVKPYVPPE.

34-41 serves as a coordination point for ATP; sequence KGGVGKTT. The active site involves Asp63. ATP-binding residues include Glu245 and Asn272. Residues Cys283 and Cys286 each contribute to the Zn(2+) site.

Belongs to the arsA ATPase family. Homodimer.

Its subcellular location is the cytoplasm. The protein resides in the endoplasmic reticulum. Functionally, ATPase required for the post-translational delivery of tail-anchored (TA) proteins to the endoplasmic reticulum. Recognizes and selectively binds the transmembrane domain of TA proteins in the cytosol. This complex then targets to the endoplasmic reticulum by membrane-bound receptors, where the tail-anchored protein is released for insertion. This process is regulated by ATP binding and hydrolysis. ATP binding drives the homodimer towards the closed dimer state, facilitating recognition of newly synthesized TA membrane proteins. ATP hydrolysis is required for insertion. Subsequently, the homodimer reverts towards the open dimer state, lowering its affinity for the membrane-bound receptor, and returning it to the cytosol to initiate a new round of targeting. In Talaromyces marneffei (strain ATCC 18224 / CBS 334.59 / QM 7333) (Penicillium marneffei), this protein is ATPase get3 (get3).